A 695-amino-acid polypeptide reads, in one-letter code: Exocyst complex component EXO70C2 (695 aa).

Positions 1-36 (MEKNDKDPDHDDKSKGDEKGDVVSDAHPSDDAHHQD) are enriched in basic and acidic residues. Disordered regions lie at residues 1–71 (MEKN…EEAP) and 210–229 (VVTD…QDHQ). Thr212 is modified (phosphothreonine). Residues Ser215 and Ser217 each carry the phosphoserine modification. At Thr446 the chain carries Phosphothreonine. Phosphoserine is present on residues Ser494 and Ser605.

The protein belongs to the EXO70 family. In terms of assembly, interacts with ROH1A and ROH1D independently of its phosphorylation status. In terms of processing, phosphorylation on Ser and Thr residues promotes its ability to repress pollen tube growth and to regulate cellular architecture at the pollen tube tip. As to expression, expressed in anthers, pollen and root trichoblast cells. Also observed in anther tapetum.

The protein localises to the cytoplasm. Required for optimal tip growth of pollen tube; dose-dependent negative regulator of exocyst function in pollen tube growth and cellular architecture at the pollen tube tip, probably by modulating membrane trafficking and exocytosis dynamics. In Arabidopsis thaliana (Mouse-ear cress), this protein is Exocyst complex component EXO70C2.